A 472-amino-acid chain; its full sequence is Methanethiol oxidase (472 aa).

At Ala2 the chain carries N-acetylalanine. A phosphoserine mark is found at Ser111, Ser371, and Ser467.

This sequence belongs to the selenium-binding protein family. Interacts with USP33. Phosphorylated. Post-translationally, the N-terminus is blocked. In terms of tissue distribution, widely expressed. Highly expressed in liver, lung, colon, prostate, kidney and pancreas. In brain, present both in neurons and glia (at protein level). Down-regulated in lung adenocarcinoma, colorectal carcinoma and ovarian cancer. Two-fold up-regulated in brain and blood from schizophrenia patients.

The protein resides in the nucleus. It is found in the cytoplasm. It localises to the cytosol. The protein localises to the membrane. The catalysed reaction is methanethiol + O2 + H2O = hydrogen sulfide + formaldehyde + H2O2 + H(+). It functions in the pathway organosulfur degradation. In terms of biological role, catalyzes the oxidation of methanethiol, an organosulfur compound known to be produced in substantial amounts by gut bacteria. Selenium-binding protein which may be involved in the sensing of reactive xenobiotics in the cytoplasm. May be involved in intra-Golgi protein transport. This Homo sapiens (Human) protein is Methanethiol oxidase (SELENBP1).